Consider the following 487-residue polypeptide: Malonate-semialdehyde dehydrogenase (487 aa).

The NAD(+) site is built by alanine 150, phenylalanine 152, lysine 176, glutamate 179, arginine 180, serine 229, and threonine 251. Cysteine 284 serves as the catalytic Nucleophile. Glutamate 382 serves as a coordination point for NAD(+).

It belongs to the aldehyde dehydrogenase family. IolA subfamily. Homotetramer.

It carries out the reaction 3-oxopropanoate + NAD(+) + CoA + H2O = hydrogencarbonate + acetyl-CoA + NADH + H(+). It catalyses the reaction 2-methyl-3-oxopropanoate + NAD(+) + CoA + H2O = propanoyl-CoA + hydrogencarbonate + NADH + H(+). It functions in the pathway polyol metabolism; myo-inositol degradation into acetyl-CoA; acetyl-CoA from myo-inositol: step 7/7. Functionally, catalyzes the oxidation of malonate semialdehyde (MSA) and methylmalonate semialdehyde (MMSA) into acetyl-CoA and propanoyl-CoA, respectively. Is involved in a myo-inositol catabolic pathway. Bicarbonate, and not CO2, is the end-product of the enzymatic reaction. In Bacillus subtilis subsp. natto, this protein is Malonate-semialdehyde dehydrogenase.